The sequence spans 453 residues: GTPase Der (453 aa).

EngA-type G domains are found at residues 3–167 and 187–360; these read PIIV…ISEK and IKVA…EDSK. GTP contacts are provided by residues 9–16, 57–61, 119–122, 193–200, 240–244, and 305–308; these read GRTNVGKS, DTAGL, NKID, GRPNVGKS, DTAGA, and NKCD. Residues 361-445 enclose the KH-like domain; that stretch reads RKISTSTLIR…PIQIQFKDNE (85 aa).

The protein belongs to the TRAFAC class TrmE-Era-EngA-EngB-Septin-like GTPase superfamily. EngA (Der) GTPase family. As to quaternary structure, associates with the 50S ribosomal subunit.

In terms of biological role, GTPase that plays an essential role in the late steps of ribosome biogenesis. The sequence is that of GTPase Der from Buchnera aphidicola subsp. Acyrthosiphon pisum (strain Tuc7).